The following is an 876-amino-acid chain: Serrate RNA effector molecule homolog (876 aa).

Residues 1–90 (MGDSDDEYDR…RRDWDEHSSD (90 aa)) are disordered. Gly2 bears the N-acetylglycine mark. A Phosphoserine modification is found at Ser4. Tyr8 is modified (phosphotyrosine). Residues 8–73 (YDRRRRDKFR…ERFSPPRHEL (66 aa)) show a composition bias toward basic and acidic residues. Ser67, Ser74, and Ser136 each carry phosphoserine. A Glycyl lysine isopeptide (Lys-Gly) (interchain with G-Cter in SUMO2) cross-link involves residue Lys150. Residues 271–412 (EEEEEQAGKP…KPKDAAGLEC (142 aa)) are disordered. Basic and acidic residues predominate over residues 297 to 347 (DGERKTNDKDEKKEDGKQAENDSSNDDKTKKSEGDGDKEEKKEDSEKEAKK). A compositionally biased stretch (acidic residues) spans 370 to 387 (SESESESGQAEEEKEEAE). Residues 388–412 (EALKEKEKPKEEEWEKPKDAAGLEC) are compositionally biased toward basic and acidic residues. Phosphoserine is present on residues Ser493 and Ser540. At Thr544 the chain carries Phosphothreonine. The residue at position 570 (Ser570) is a Phosphoserine. Residues 575 to 598 (ELLGSSGGAPPEEPPKEGNPAEIN) form a disordered region. Thr671 carries the post-translational modification Phosphothreonine. Ser679 is modified (phosphoserine). Omega-N-methylarginine occurs at positions 833, 840, and 850. The tract at residues 835–854 (NYDAFRGQGGYPGKPRNRMV) is disordered.

This sequence belongs to the ARS2 family. As to quaternary structure, interacts with NCBP1 and DROSHA. Interacts with CASP8AP2 and ERBB4. Interacts with LUZP4. Interacts with NCBP2/CBP20 and NCBP3. Interacts with MTREX. Ubiquitously expressed.

The protein resides in the nucleus. It is found in the nucleoplasm. The protein localises to the cytoplasm. Acts as a mediator between the cap-binding complex (CBC) and the primary microRNAs (miRNAs) processing machinery during cell proliferation. Contributes to the stability and delivery of capped primary miRNA transcripts to the primary miRNA processing complex containing DGCR8 and DROSHA, thereby playing a role in RNA-mediated gene silencing (RNAi) by miRNAs. Binds capped RNAs (m7GpppG-capped RNA); however interaction is probably mediated via its interaction with NCBP1/CBP80 component of the CBC complex. Involved in cell cycle progression at S phase. Does not directly confer arsenite resistance but rather modulates arsenic sensitivity. Independently of its activity on miRNAs, necessary and sufficient to promote neural stem cell self-renewal. Does so by directly binding SOX2 promoter and positively regulating its transcription. The polypeptide is Serrate RNA effector molecule homolog (SRRT) (Homo sapiens (Human)).